A 356-amino-acid polypeptide reads, in one-letter code: Probable cinnamyl alcohol dehydrogenase (356 aa).

Cysteine 47 contributes to the Zn(2+) binding site. An NADP(+)-binding site is contributed by serine 49. Residues histidine 69, glutamate 70, cysteine 100, cysteine 103, cysteine 106, cysteine 114, and cysteine 163 each coordinate Zn(2+). NADP(+)-binding positions include threonine 167, 188–193, 211–216, threonine 251, glycine 275, and 298–300; these read GLGGVG, SSSDKK, and SFI.

It belongs to the zinc-containing alcohol dehydrogenase family. As to quaternary structure, homodimer. Zn(2+) is required as a cofactor.

It catalyses the reaction (E)-cinnamyl alcohol + NADP(+) = (E)-cinnamaldehyde + NADPH + H(+). It carries out the reaction (E)-coniferol + NADP(+) = (E)-coniferaldehyde + NADPH + H(+). The enzyme catalyses (E)-sinapyl alcohol + NADP(+) = (E)-sinapaldehyde + NADPH + H(+). The catalysed reaction is (E)-4-coumaroyl alcohol + NADP(+) = (E)-4-coumaraldehyde + NADPH + H(+). It catalyses the reaction (E)-caffeyl alcohol + NADP(+) = (E)-caffeyl aldehyde + NADPH + H(+). Its pathway is aromatic compound metabolism; phenylpropanoid biosynthesis. In terms of biological role, involved in lignin biosynthesis. Catalyzes the final step specific for the production of lignin monomers. Catalyzes the NADPH-dependent reduction of coniferaldehyde, 5-hydroxyconiferaldehyde, sinapaldehyde, 4-coumaraldehyde and caffeyl aldehyde to their respective alcohols. This chain is Probable cinnamyl alcohol dehydrogenase (CAD), found in Eucalyptus globulus (Tasmanian blue gum).